A 347-amino-acid chain; its full sequence is Quinolinate synthase (347 aa).

Residues H47 and S68 each coordinate iminosuccinate. C113 lines the [4Fe-4S] cluster pocket. Iminosuccinate contacts are provided by residues 139 to 141 (YAN) and S156. Residue C200 participates in [4Fe-4S] cluster binding. Iminosuccinate contacts are provided by residues 226–228 (HPE) and T243. C297 serves as a coordination point for [4Fe-4S] cluster.

It belongs to the quinolinate synthase family. Type 1 subfamily. Requires [4Fe-4S] cluster as cofactor.

Its subcellular location is the cytoplasm. The catalysed reaction is iminosuccinate + dihydroxyacetone phosphate = quinolinate + phosphate + 2 H2O + H(+). It participates in cofactor biosynthesis; NAD(+) biosynthesis; quinolinate from iminoaspartate: step 1/1. Its function is as follows. Catalyzes the condensation of iminoaspartate with dihydroxyacetone phosphate to form quinolinate. The sequence is that of Quinolinate synthase from Salmonella paratyphi A (strain ATCC 9150 / SARB42).